The sequence spans 217 residues: Fucoxanthin-chlorophyll a-c binding protein B, chloroplastic (217 aa).

A chloroplast-targeting transit peptide spans 1 to 39 (MKSAVMAVACAAAPGFRGPSAFNGAALTTSAKACSAMKM). Helical transmembrane passes span 81 to 101 (IAML…PGML), 122 to 142 (IPPA…LAVM), and 183 to 203 (GRAA…NNKP).

The protein belongs to the fucoxanthin chlorophyll protein family. As to quaternary structure, the LHC complex of chromophytic algae is composed of fucoxanthin, chlorophyll A and C bound non-covalently by fucoxanthin chlorophyll proteins (FCPs). The ratio of pigments in this LHC is; fucoxanthin: chlorophyll C: chlorophyll A; (0.6-1): (0.1-0.3): (1).

The protein localises to the plastid. Its subcellular location is the chloroplast thylakoid membrane. Its function is as follows. The light-harvesting complex (LHC) functions as a light receptor, it captures and delivers excitation energy to photosystems with which it is closely associated. Energy is transferred from the carotenoid and chlorophyll C (or B) to chlorophyll A and the photosynthetic reaction centers where it is used to synthesize ATP and reducing power. This chain is Fucoxanthin-chlorophyll a-c binding protein B, chloroplastic (FCPB), found in Macrocystis pyrifera (Giant kelp).